The chain runs to 215 residues: 3-demethoxyubiquinol 3-hydroxylase (215 aa).

The Fe cation site is built by glutamate 64, glutamate 94, histidine 97, glutamate 146, glutamate 178, and histidine 181.

The protein belongs to the COQ7 family. It depends on Fe cation as a cofactor.

It is found in the cell membrane. It carries out the reaction a 5-methoxy-2-methyl-3-(all-trans-polyprenyl)benzene-1,4-diol + AH2 + O2 = a 3-demethylubiquinol + A + H2O. It participates in cofactor biosynthesis; ubiquinone biosynthesis. Its function is as follows. Catalyzes the hydroxylation of 2-nonaprenyl-3-methyl-6-methoxy-1,4-benzoquinol during ubiquinone biosynthesis. In Pseudomonas putida (strain W619), this protein is 3-demethoxyubiquinol 3-hydroxylase.